We begin with the raw amino-acid sequence, 452 residues long: Protein henna (452 aa).

Residues 36–107 (FSPKDSSLSS…EQCSYFNIIS (72 aa)) form the ACT domain. S272 carries the phosphoserine; by CaMK2 modification. Residues H284, H289, and E329 each contribute to the Fe cation site.

This sequence belongs to the biopterin-dependent aromatic amino acid hydroxylase family. Requires Fe(2+) as cofactor. As to expression, phenylalanine hydrolase activity is found in yolk granules of embryos, and female abdomen and fat body tissues. Tryptophan hydroxylase is expressed in serotonergic neurons. Both enzymes are present in cuticular tissues.

It catalyses the reaction (6R)-L-erythro-5,6,7,8-tetrahydrobiopterin + L-phenylalanine + O2 = (4aS,6R)-4a-hydroxy-L-erythro-5,6,7,8-tetrahydrobiopterin + L-tyrosine. The catalysed reaction is (6R)-L-erythro-5,6,7,8-tetrahydrobiopterin + L-tryptophan + O2 = 5-hydroxy-L-tryptophan + (4aS,6R)-4a-hydroxy-L-erythro-5,6,7,8-tetrahydrobiopterin. The protein operates within amino-acid degradation; L-phenylalanine degradation; acetoacetate and fumarate from L-phenylalanine: step 1/6. Its activity is regulated as follows. N-terminal region of PAH is thought to contain allosteric binding sites for phenylalanine and to constitute an 'inhibitory' domain that regulates the activity of a catalytic domain in the C-terminal portion of the molecule. This is Protein henna (Hn) from Drosophila melanogaster (Fruit fly).